Consider the following 224-residue polypeptide: Ribonuclease T (224 aa).

Positions 20–194 (VVIDVETAGF…YDTERTAELF (175 aa)) constitute an Exonuclease domain. Residues D23, E25, H181, and D186 each coordinate Mg(2+). The active-site Proton donor/acceptor is the H181.

It belongs to the RNase T family. As to quaternary structure, homodimer. It depends on Mg(2+) as a cofactor.

Its function is as follows. Trims short 3' overhangs of a variety of RNA species, leaving a one or two nucleotide 3' overhang. Responsible for the end-turnover of tRNA: specifically removes the terminal AMP residue from uncharged tRNA (tRNA-C-C-A). Also appears to be involved in tRNA biosynthesis. The protein is Ribonuclease T of Shewanella putrefaciens (strain CN-32 / ATCC BAA-453).